A 184-amino-acid polypeptide reads, in one-letter code: ATP synthase subunit delta (184 aa).

The protein belongs to the ATPase delta chain family. In terms of assembly, F-type ATPases have 2 components, F(1) - the catalytic core - and F(0) - the membrane proton channel. F(1) has five subunits: alpha(3), beta(3), gamma(1), delta(1), epsilon(1). F(0) has three main subunits: a(1), b(2) and c(10-14). The alpha and beta chains form an alternating ring which encloses part of the gamma chain. F(1) is attached to F(0) by a central stalk formed by the gamma and epsilon chains, while a peripheral stalk is formed by the delta and b chains.

The protein resides in the cell inner membrane. Its function is as follows. F(1)F(0) ATP synthase produces ATP from ADP in the presence of a proton or sodium gradient. F-type ATPases consist of two structural domains, F(1) containing the extramembraneous catalytic core and F(0) containing the membrane proton channel, linked together by a central stalk and a peripheral stalk. During catalysis, ATP synthesis in the catalytic domain of F(1) is coupled via a rotary mechanism of the central stalk subunits to proton translocation. Functionally, this protein is part of the stalk that links CF(0) to CF(1). It either transmits conformational changes from CF(0) to CF(1) or is implicated in proton conduction. This chain is ATP synthase subunit delta, found in Rickettsia rickettsii (strain Iowa).